Here is a 398-residue protein sequence, read N- to C-terminus: Polyferredoxin protein VhuB (398 aa).

4Fe-4S ferredoxin-type domains lie at Ala2 to Phe31, Ala25 to Asn53, Gly54 to Arg83, Asp82 to Lys111, Gln123 to Glu152, Glu152 to Lys181, Lys191 to Glu219, Asp220 to Glu249, Glu259 to Gln291, Thr300 to Ile331, and Asn339 to Asp368. Residues Cys11, Cys14, Cys17, Cys21, Cys34, Cys37, Cys40, Cys44, Cys63, Cys66, Cys69, Cys73, Cys91, Cys94, Cys97, Cys101, Cys132, Cys135, Cys138, Cys142, Cys161, Cys164, Cys167, Cys171, Cys199, Cys202, Cys205, Cys209, Cys229, Cys232, Cys235, Cys239, Cys268, Cys271, Cys274, Cys278, Cys311, Cys314, Cys317, Cys321, Cys348, Cys351, Cys354, Cys358, Cys377, Cys380, Cys383, and Cys387 each coordinate [4Fe-4S] cluster.

It depends on [4Fe-4S] cluster as a cofactor.

The protein is Polyferredoxin protein VhuB (vhuB) of Methanococcus voltae.